Reading from the N-terminus, the 336-residue chain is uncharacterized protein (336 aa).

Residues 123 to 323 form the ATP-grasp domain; sequence KTLMRDSGVP…YSSLINGILD (201 aa).

This sequence belongs to the D-alanine--D-alanine ligase family.

Could be involved in the biosynthesis of a cell wall component. This is an uncharacterized protein from Sinorhizobium fredii (strain NBRC 101917 / NGR234).